A 527-amino-acid chain; its full sequence is Plant-specific TFIIB-related protein PTF2 (527 aa).

A TFIIB-type zinc finger spans residues 1–30 (MRCKRCNGSNFERDEDTGNSYCGGCGTLRE).

Can form homodimer. Interacts with TBP2. Expressed in shoot apical meristems, root tips, primordia of lateral roots, inflorescences, developing pollen grains and embryos.

It is found in the nucleus. In terms of biological role, plant-specific TFIIB-related protein that plays important roles in pollen germination and embryogenesis, possibly by regulating gene expression through interaction with TBP2 and the subunits of RNA polymerases. Binds double-stranded DNA in vitro. The sequence is that of Plant-specific TFIIB-related protein PTF2 from Arabidopsis thaliana (Mouse-ear cress).